A 519-amino-acid polypeptide reads, in one-letter code: Cytochrome P450 4A11 (519 aa).

A propeptide spanning residues 1 to 4 is cleaved from the precursor; it reads MSVS. E321 provides a ligand contact to heme. S440 is modified (phosphoserine). Residue C457 coordinates heme.

Belongs to the cytochrome P450 family. The cofactor is heme. As to expression, expressed in liver. Expressed in S2 and S3 segments of proximal tubules in cortex and outer medulla of kidney.

The protein localises to the endoplasmic reticulum membrane. It is found in the microsome membrane. It catalyses the reaction an organic molecule + reduced [NADPH--hemoprotein reductase] + O2 = an alcohol + oxidized [NADPH--hemoprotein reductase] + H2O + H(+). The catalysed reaction is an omega-methyl-long-chain fatty acid + reduced [NADPH--hemoprotein reductase] + O2 = an omega-hydroxy-long-chain fatty acid + oxidized [NADPH--hemoprotein reductase] + H2O + H(+). The enzyme catalyses dodecanoate + reduced [NADPH--hemoprotein reductase] + O2 = 12-hydroxydodecanoate + oxidized [NADPH--hemoprotein reductase] + H2O + H(+). It carries out the reaction tetradecanoate + reduced [NADPH--hemoprotein reductase] + O2 = 14-hydroxytetradecanoate + oxidized [NADPH--hemoprotein reductase] + H2O + H(+). It catalyses the reaction hexadecanoate + reduced [NADPH--hemoprotein reductase] + O2 = 16-hydroxyhexadecanoate + oxidized [NADPH--hemoprotein reductase] + H2O + H(+). The catalysed reaction is (9Z)-octadecenoate + reduced [NADPH--hemoprotein reductase] + O2 = 18-hydroxy-(9Z)-octadecenoate + oxidized [NADPH--hemoprotein reductase] + H2O + H(+). The enzyme catalyses (5Z,8Z,11Z,14Z)-eicosatetraenoate + reduced [NADPH--hemoprotein reductase] + O2 = 20-hydroxy-(5Z,8Z,11Z,14Z)-eicosatetraenoate + oxidized [NADPH--hemoprotein reductase] + H2O + H(+). It carries out the reaction 22-hydroxydocosanoate + reduced [NADPH--hemoprotein reductase] + O2 = 22-oxodocosanoate + oxidized [NADPH--hemoprotein reductase] + 2 H2O + H(+). It catalyses the reaction 22-oxodocosanoate + reduced [NADPH--hemoprotein reductase] + O2 = docosanedioate + oxidized [NADPH--hemoprotein reductase] + H2O + 2 H(+). The catalysed reaction is (9R,10S)-epoxy-octadecanoate + reduced [NADPH--hemoprotein reductase] + O2 = 18-hydroxy-(9R,10S)-epoxy-octadecanoate + oxidized [NADPH--hemoprotein reductase] + H2O + H(+). The enzyme catalyses 3-hydroxyhexadecanoate + reduced [NADPH--hemoprotein reductase] + O2 = 3,16-dihydroxyhexadecanoate + oxidized [NADPH--hemoprotein reductase] + H2O + H(+). The protein operates within lipid metabolism; arachidonate metabolism. It participates in lipid metabolism; oxylipin biosynthesis. Activated by cytochrome b5. Its function is as follows. A cytochrome P450 monooxygenase involved in the metabolism of fatty acids and their oxygenated derivatives (oxylipins). Mechanistically, uses molecular oxygen inserting one oxygen atom into a substrate, and reducing the second into a water molecule, with two electrons provided by NADPH via cytochrome P450 reductase (CPR; NADPH-ferrihemoprotein reductase). Catalyzes predominantly the oxidation of the terminal carbon (omega-oxidation) of saturated and unsaturated fatty acids, the catalytic efficiency decreasing in the following order: dodecanoic &gt; tetradecanoic &gt; (9Z)-octadecenoic &gt; (9Z,12Z)-octadecadienoic &gt; hexadecanoic acid. Acts as a major omega-hydroxylase for dodecanoic (lauric) acid in liver. Participates in omega-hydroxylation of (5Z,8Z,11Z,14Z)-eicosatetraenoic acid (arachidonate) to 20-hydroxyeicosatetraenoic acid (20-HETE), a signaling molecule acting both as vasoconstrictive and natriuretic with overall effect on arterial blood pressure. Can also catalyze the oxidation of the penultimate carbon (omega-1 oxidation) of fatty acids with lower efficiency. May contribute to the degradation of saturated very long-chain fatty acids (VLCFAs) such as docosanoic acid, by catalyzing successive omega-oxidations to the corresponding dicarboxylic acid, thereby initiating chain shortening. Omega-hydroxylates (9R,10S)-epoxy-octadecanoate stereoisomer. Plays a minor role in omega-oxidation of long-chain 3-hydroxy fatty acids. Has little activity toward prostaglandins A1 and E1. The sequence is that of Cytochrome P450 4A11 from Homo sapiens (Human).